A 492-amino-acid polypeptide reads, in one-letter code: FAD-linked oxidoreductase pgmH (492 aa).

The region spanning 54–224 (SIRLATLVVY…TEFKYRVHKQ (171 aa)) is the FAD-binding PCMH-type domain.

The protein belongs to the oxygen-dependent FAD-linked oxidoreductase family. The cofactor is FAD.

It participates in pigment biosynthesis. The protein operates within secondary metabolite biosynthesis. Its function is as follows. FAD-linked oxidoreductase; part of the gene cluster that mediates the biosynthesis of pleosporalin A, ascomycone A, as well as a third cryptic naphthoquinone derived pigment, all responsible for the coloration of conidia. Essential for the production of pleosporalin A, but not the 2 other final products. The pathway begins with the biosynthesis of the cyclized heptaketide 3-acetonyl-1,6,8-trihydroxy-2-naphthaldehyde by the NR-PKS pgmA. The C-6 hydroxyl group is further methylated by the O-methyltransferase pgmB to yield fusarubinaldehyde which is in turn oxidized by the cytochrome P450 monooxygenase pgmC at C-9. The C-1 hydroxyl group is then methylated spontaneously. Although pgmE, pgmD and pgmH are essential for the production of pleosporalin A, it is not the case for the 2 other final products and it remains difficult to assign a specific function to each enzyme. PgmF and pgmG seem not to be involved in pigment biosynthesis although they were regulated by the cluster-specific transcription factor pgmR. In Aspergillus terreus, this protein is FAD-linked oxidoreductase pgmH.